The following is a 75-amino-acid chain: Salivary glue protein Sgs-8 (75 aa).

Residues 1–24 (MKLLVVAVIACIMLIGFADPASGC) form the signal peptide.

The polypeptide is Salivary glue protein Sgs-8 (Sgs8) (Drosophila melanogaster (Fruit fly)).